The chain runs to 87 residues: HssA/B-like protein 56 (87 aa).

This sequence belongs to the hssA/B family.

The polypeptide is HssA/B-like protein 56 (hssl56) (Dictyostelium discoideum (Social amoeba)).